The sequence spans 698 residues: Long-chain-fatty-acid--CoA ligase 1 (698 aa).

The residue at position 1 (methionine 1) is an N-acetylmethionine. The residue at position 9 (tyrosine 9) is a 3'-nitrotyrosine. Residues 25 to 45 traverse the membrane as a helical; Signal-anchor for type III membrane protein segment; the sequence is LPTNTLMGFGAFAALTTFWYA. The Cytoplasmic portion of the chain corresponds to 46–698; it reads TRPKPLKPPC…IDDLYSTIKV (653 aa). Tyrosine 84 bears the Phosphotyrosine mark. A glycan (O-linked (GlcNAc) serine) is linked at serine 135. N6-acetyllysine is present on residues lysine 207, lysine 356, and lysine 386. Residue serine 620 is modified to Phosphoserine. Lysine 632 is subject to N6-acetyllysine.

Belongs to the ATP-dependent AMP-binding enzyme family. It depends on Mg(2+) as a cofactor. Highly expressed in liver, heart, skeletal muscle, kidney and erythroid cells, and to a lesser extent in brain, lung, placenta and pancreas.

It localises to the mitochondrion outer membrane. Its subcellular location is the peroxisome membrane. It is found in the microsome membrane. The protein localises to the endoplasmic reticulum membrane. It catalyses the reaction a long-chain fatty acid + ATP + CoA = a long-chain fatty acyl-CoA + AMP + diphosphate. The catalysed reaction is (5Z,8Z,11Z,14Z)-eicosatetraenoate + ATP + CoA = (5Z,8Z,11Z,14Z)-eicosatetraenoyl-CoA + AMP + diphosphate. The enzyme catalyses 3,7,11,15-tetramethylhexadecanoate + ATP + CoA = phytanoyl-CoA + AMP + diphosphate. It carries out the reaction hexadecanoate + ATP + CoA = hexadecanoyl-CoA + AMP + diphosphate. It catalyses the reaction (E)-hexadec-2-enoate + ATP + CoA = (2E)-hexadecenoyl-CoA + AMP + diphosphate. The catalysed reaction is 2,6,10,14-tetramethylpentadecanoate + ATP + CoA = pristanoyl-CoA + AMP + diphosphate. The enzyme catalyses 14,15-epoxy-(5Z,8Z,11Z)-eicosatrienoate + ATP + CoA = 14,15-epoxy-(5Z,8Z,11Z)-eicosatrienoyl-CoA + AMP + diphosphate. It carries out the reaction 5-hydroxy-(6E,8Z,11Z,14Z)-eicosatetraenoate + ATP + CoA = 5-hydroxy-(6E,8Z,11Z,14Z)-eicosatetraenoyl-CoA + AMP + diphosphate. It catalyses the reaction 12-hydroxy-(5Z,8Z,10E,14Z)-eicosatetraenoate + ATP + CoA = 12-hydroxy-(5Z,8Z,10E,14Z)-eicosatetraenoyl-CoA + AMP + diphosphate. The catalysed reaction is 15-hydroxy-(5Z,8Z,11Z,13E)-eicosatetraenoate + ATP + CoA = 15-hydroxy-(5Z,8Z,11Z,13E)-eicosatetraenoyl-CoA + AMP + diphosphate. The enzyme catalyses (9Z)-octadecenoate + ATP + CoA = (9Z)-octadecenoyl-CoA + AMP + diphosphate. With respect to regulation, inhibited at high temperature and by arachidonate. Catalyzes the conversion of long-chain fatty acids to their active form acyl-CoAs for both synthesis of cellular lipids, and degradation via beta-oxidation. Preferentially uses palmitoleate, oleate and linoleate. Preferentially activates arachidonate than epoxyeicosatrienoic acids (EETs) or hydroxyeicosatrienoic acids (HETEs). The sequence is that of Long-chain-fatty-acid--CoA ligase 1 from Homo sapiens (Human).